Reading from the N-terminus, the 539-residue chain is Putative S-adenosyl-L-methionine-dependent methyltransferase MAP_4079 (539 aa).

Residues Asp-134 and 163-164 (DL) each bind S-adenosyl-L-methionine. The interval 290–392 (AGYGRGRRRP…RGEPGERGGQ (103 aa)) is disordered. A compositionally biased stretch (polar residues) spans 301–313 (SATSCRGTCSSPR). Gly residues predominate over residues 341 to 351 (HGFGNQCGGPD).

This sequence belongs to the UPF0677 family.

Functionally, exhibits S-adenosyl-L-methionine-dependent methyltransferase activity. This Mycolicibacterium paratuberculosis (strain ATCC BAA-968 / K-10) (Mycobacterium paratuberculosis) protein is Putative S-adenosyl-L-methionine-dependent methyltransferase MAP_4079.